A 560-amino-acid polypeptide reads, in one-letter code: Protein DETOXIFICATION 45, chloroplastic (560 aa).

The transit peptide at 1–75 (MESSRVVVGG…QTNPDCGVVK (75 aa)) directs the protein to the chloroplast. Transmembrane regions (helical) follow at residues 109–129 (LVML…TLLM), 147–167 (VSMA…LSVA), 209–229 (ALVL…LASG), 250–270 (FLVL…LQGI), 280–300 (PVYC…LFIY), 308–328 (GAAI…LILL), 353–373 (FVLG…SMAA), 389–411 (VWLA…IASS), 426–446 (FVLK…GMSF), 466–486 (GVLF…FDGL), 495–515 (YAAC…LYAP), and 523–543 (VWVG…SRLM).

It belongs to the multi antimicrobial extrusion (MATE) (TC 2.A.66.1) family. As to expression, ubiquitous.

It is found in the plastid. It localises to the chloroplast membrane. The polypeptide is Protein DETOXIFICATION 45, chloroplastic (Arabidopsis thaliana (Mouse-ear cress)).